The sequence spans 876 residues: MLTSKEIRESFKTFFASKGHKIVPSAPMVIKGDPTLMFTNAGMNQFKDIILGNTEAKYTRVADSQKCLRVSGKHNDLEEVGHDTYHHTMFEMLGNWSFGDYFKKEAIEWAWEYLVTVLGLDPQRLYATVFEGNPEEGLDRDNEAASYWAQFLPEERIINGNKHDNFWEMGDTGPCGPCSEIHIDLRSDEERAQINGLELINKSHPQVIEIWNLVFMQYNRKADASLTPLPHKVIDTGMGFERLCMALQGKTSNYDTDVFQPLIRTLATMTGIGYGEDSTSDIAMRVVADHIRTIAFAITDGQLPSNAKAGYVIRRILRRAVRYGYTFLHCREAFMYRLLPTLIDTMGDAYPELQAQRELISRVIKEEEESFLRTLETGIRLLEKKIADNKATGSTVLDGVAAFELYDTFGFPLDLTALILSENGMTVDESGFDTEMQKQKERARNAAAVEAGDWVVLREGESKFSGYDFTETETEILRYRQVKQKNKEYFQVVLSDTPFYAEMGGQVGDSGQLIDESGVAYDIFDTKRENNLSVHLMKKLPESTTDTFVARINQDKRRQAEANHTATHLLHEALREVLGTHVEQKGSFVSPEVLRFDFSHFGKMSPEEIRKVEELVSERIRADFQREEFRDVPIAEAQAMGAMALFGEKYGEEVRVLKYGSSVELCGGTHIPSTGMIGAFRIVTESSIASGVRRIEAVTGIGAERFIYEKEDILLAVKELFNNNPNLIKSIKKMLEEDASLKKQIADMKHERMLKFKKSLLEQDVRRRGIRLFLFQEIMEAETAKDIAFQIAGELQESFVLIAGTTEGGEKCALTVMLSKDLTEGGMDAAKLVRSAAKHIQGGGGGQPHFATAGGKNPKGLPAAIQQILTEAELTD.

Residues H564, H568, C666, and H670 each contribute to the Zn(2+) site.

This sequence belongs to the class-II aminoacyl-tRNA synthetase family. Zn(2+) is required as a cofactor.

Its subcellular location is the cytoplasm. The enzyme catalyses tRNA(Ala) + L-alanine + ATP = L-alanyl-tRNA(Ala) + AMP + diphosphate. Its function is as follows. Catalyzes the attachment of alanine to tRNA(Ala) in a two-step reaction: alanine is first activated by ATP to form Ala-AMP and then transferred to the acceptor end of tRNA(Ala). Also edits incorrectly charged Ser-tRNA(Ala) and Gly-tRNA(Ala) via its editing domain. The polypeptide is Alanine--tRNA ligase (Porphyromonas gingivalis (strain ATCC BAA-308 / W83)).